We begin with the raw amino-acid sequence, 702 residues long: Vacuolar protein sorting-associated protein 52 homolog (702 aa).

A coiled-coil region spans residues 505–535 (KEMGAKMEAVLENSEDSIEQLLTRMSAMQQT).

It belongs to the VPS52 family. Component of the Golgi-associated retrograde protein (GARP) complex, also called VFT (VPS fifty-three) complex, composed of vps-51, vps-52, vps-53 and vps-54. Within the complex interacts with vps-53 and vps-54. Interacts with the small GTPases rab-6.1 and rab-6.2. As to expression, ubiquitously expressed, with particularly strong expression in neuronal cells. Specifically expressed in head and tail neurons and in the pharynx and ventral cord motor neurons.

It is found in the golgi apparatus. The protein localises to the trans-Golgi network. Its subcellular location is the perikaryon. The protein resides in the cytoplasm. It localises to the perinuclear region. Acts as a component of the GARP complex that is involved in retrograde transport from early and late endosomes to the trans-Golgi network (TGN). The GARP complex facilitates tethering as well as SNARE complex assembly at the Golgi. Plays a role in the trafficking of cargo to dense-core vesicles, probably through association with the EARP-interacting protein eipr-1. Important for neuronal function. The chain is Vacuolar protein sorting-associated protein 52 homolog from Caenorhabditis elegans.